A 702-amino-acid chain; its full sequence is MARTTPIARYRNIGISAHIDAGKTTTTERILFYTGVNHKIGEVHDGAATMDWMEQEQERGITITSAATTAFWSGMAKQFDAHRINIIDTPGHVDFTIEVERSMRVLDGAVMVYCAVGGVQPQSETVWRQANKYRVPRIAFVNKMDRMGANFLRVVEQLKTRLAANPVPLQLAIGAEDAFTGVVDLVKMKAINWNDEDQGTTFTYEDIPADMQDLAEEWRSNLIEAAAEASEELMEKYLGGEELTEEEIKAGLRHRVLTNEIILVTCGSAFKNKGVQAMLDAVIEYLPAPTDVESIKGILPDGKDTSAERHSDDNEPFSALAFKIATDPFVGNLTFFRVYSGVVNSGDTVLNPVKDRKERFGRIVQMHANKREEIKEVRAGDIAAAIGLKDVTTGDTLCDINAPIILERMEFPEPVISVAIEPKTKADQEKMGIALGRLAQEDPSFRVSTDEESGQTIIAGMGELHLDVLVDRMRREFKVEANVGKPQVAYRETIRSTVEQEGKFVRQSGGRGQFGHVWLRIEPMEPGGVGYEFANEIVGGVVPKEYIPAVDKGIQEQMKNGVLAGYPIVDVKVALFDGSYHEVDSSEMAFKIAGSMGFKEGFMKAKPALLEPIMKVEVETPEDYMGDVIGDLNRRRGMIDGMEDMTTGKIVRAQVPLSEMFGYATDLRSQTQGRASYSMEFLKYNEAPSNVAQAIIEARKAK.

Residues 8–290 (ARYRNIGISA…AVIEYLPAPT (283 aa)) form the tr-type G domain. GTP-binding positions include 17–24 (AHIDAGKT), 88–92 (DTPGH), and 142–145 (NKMD).

It belongs to the TRAFAC class translation factor GTPase superfamily. Classic translation factor GTPase family. EF-G/EF-2 subfamily.

It localises to the cytoplasm. Functionally, catalyzes the GTP-dependent ribosomal translocation step during translation elongation. During this step, the ribosome changes from the pre-translocational (PRE) to the post-translocational (POST) state as the newly formed A-site-bound peptidyl-tRNA and P-site-bound deacylated tRNA move to the P and E sites, respectively. Catalyzes the coordinated movement of the two tRNA molecules, the mRNA and conformational changes in the ribosome. The sequence is that of Elongation factor G from Photorhabdus laumondii subsp. laumondii (strain DSM 15139 / CIP 105565 / TT01) (Photorhabdus luminescens subsp. laumondii).